Here is a 132-residue protein sequence, read N- to C-terminus: Ribosome-binding factor A (132 aa).

This sequence belongs to the RbfA family. As to quaternary structure, monomer. Binds 30S ribosomal subunits, but not 50S ribosomal subunits or 70S ribosomes.

The protein localises to the cytoplasm. In terms of biological role, one of several proteins that assist in the late maturation steps of the functional core of the 30S ribosomal subunit. Associates with free 30S ribosomal subunits (but not with 30S subunits that are part of 70S ribosomes or polysomes). Required for efficient processing of 16S rRNA. May interact with the 5'-terminal helix region of 16S rRNA. In Treponema denticola (strain ATCC 35405 / DSM 14222 / CIP 103919 / JCM 8153 / KCTC 15104), this protein is Ribosome-binding factor A.